The chain runs to 626 residues: Solute carrier family 13 member 4 (626 aa).

A run of 4 helical transmembrane segments spans residues 13-33 (LLLV…HPSS), 52-72 (AVPL…FGVL), 77-97 (VAAE…CVAA), and 113-133 (VLMA…CTTL). Residues 217–228 (SITNPIKTANQH) show a composition bias toward polar residues. The interval 217–252 (SITNPIKTANQHQGKKQHPSQEKPQVLTPSPRKQKL) is disordered. The next 8 helical transmembrane spans lie at 274–294 (YSAT…LIFL), 309–329 (FGTW…VSWF), 372–392 (ISYP…LWFT), 414–434 (ATVS…KPCF), 466–486 (IVIL…SGLS), 499–519 (LPPW…TEFV), 543–563 (PLYT…LPVG), and 590–610 (VIGL…LFHL).

This sequence belongs to the SLC13A/DASS transporter (TC 2.A.47) family. NADC subfamily. Highly expressed in placenta and testis with intermediate levels in brain and lower levels in heart, thymus and liver.

The protein localises to the membrane. The catalysed reaction is sulfate(out) + 3 Na(+)(out) = sulfate(in) + 3 Na(+)(in). Transport is inhibited by thiosulfate, phosphate, molybdate, selenate and tungstate. Not inhibited by oxalate, citrate, succinate, phenol red or 4,4'-diisothiocyanostilbene-2,2'-disulfonic acid (DIDS). In terms of biological role, sodium:sulfate symporter that mediates sulfate reabsorption in the high endothelial venules (HEV). The protein is Solute carrier family 13 member 4 (SLC13A4) of Homo sapiens (Human).